The chain runs to 749 residues: Tryptophan 2-monooxygenase (749 aa).

The FMN site is built by S232, E252, K260, and R280. R280 lines the substrate pocket.

The protein belongs to the tryptophan 2-monooxygenase family. FMN serves as cofactor.

It catalyses the reaction L-tryptophan + O2 = indole-3-acetamide + CO2 + H2O. It functions in the pathway plant hormone metabolism; auxin biosynthesis. The polypeptide is Tryptophan 2-monooxygenase (aux1) (Rhizobium rhizogenes (Agrobacterium rhizogenes)).